The sequence spans 545 residues: Membrane protein insertase YidC (545 aa).

The helical transmembrane segment at 6–26 threads the bilayer; it reads FVLFVFFIFLSFLLWEQWQID. The interval 32–69 is disordered; it reads QAVAQTDGASRPAGDLPQRPSDDESDVTVHTEAPTQEG. 4 helical membrane passes run 354–374, 425–445, 462–482, and 500–520; these read FFNN…ALFF, GGCL…WVLV, LSSK…MFIQ, and FFPL…VLYW.

Belongs to the OXA1/ALB3/YidC family. Type 1 subfamily. As to quaternary structure, interacts with the Sec translocase complex via SecD. Specifically interacts with transmembrane segments of nascent integral membrane proteins during membrane integration.

Its subcellular location is the cell inner membrane. Required for the insertion and/or proper folding and/or complex formation of integral membrane proteins into the membrane. Involved in integration of membrane proteins that insert both dependently and independently of the Sec translocase complex, as well as at least some lipoproteins. Aids folding of multispanning membrane proteins. This Methylococcus capsulatus (strain ATCC 33009 / NCIMB 11132 / Bath) protein is Membrane protein insertase YidC.